The following is a 286-amino-acid chain: ATP phosphoribosyltransferase (286 aa).

The protein belongs to the ATP phosphoribosyltransferase family. Long subfamily. It depends on Mg(2+) as a cofactor.

Its subcellular location is the cytoplasm. It carries out the reaction 1-(5-phospho-beta-D-ribosyl)-ATP + diphosphate = 5-phospho-alpha-D-ribose 1-diphosphate + ATP. The protein operates within amino-acid biosynthesis; L-histidine biosynthesis; L-histidine from 5-phospho-alpha-D-ribose 1-diphosphate: step 1/9. Feedback inhibited by histidine. Catalyzes the condensation of ATP and 5-phosphoribose 1-diphosphate to form N'-(5'-phosphoribosyl)-ATP (PR-ATP). Has a crucial role in the pathway because the rate of histidine biosynthesis seems to be controlled primarily by regulation of HisG enzymatic activity. The chain is ATP phosphoribosyltransferase from Paenarthrobacter aurescens (strain TC1).